Reading from the N-terminus, the 488-residue chain is Aerolysin (488 aa).

The first 24 residues, 1-24 (MMNRIITANLAFLASSLMLAQVQA), serve as a signal peptide directing secretion. 2 disulfide bridges follow: Cys-43-Cys-99 and Cys-183-Cys-188. The interaction with host N-linked glycan stretch occupies residues 69 to 85 (WQITGLADRWVIMGPGY). Residues 256-288 (YSLSEKVTTKNKFQWPLVGETELAIEIAASQSW) are part of the transmembrane beta-barrel after proteolytic activation of the toxin and insertion into the host membrane. Residues 346–355 (RWGGNAWYTH) are interaction with glycans from host GPI-anchor. Residues 444 to 488 (TRSAKAAQLRSASAEEVALTSVDLDSEALANEGFGNVSLTIVPVQ) constitute a propeptide that is removed on maturation.

This sequence belongs to the aerolysin family. As to quaternary structure, homodimer in solution; homoheptamer in the host membrane. After binding to GPI-anchored proteins in target membranes and proteolytic removal of the C-terminal propeptide, the protein assembles into a heptameric pre-pore complex. A further conformation change leads to insertion into the host membrane. In terms of processing, proteolytic cleavage and subsequent release of the propeptide trigger a major conformation change, leading to the formation of a heptameric pre-pore that then inserts into the host membrane.

It localises to the secreted. The protein localises to the host cell membrane. Functionally, secreted, cytolytic toxin that forms pores in host membranes after proteolytic removal of a C-terminal propeptide, leading to destruction of the membrane permeability barrier and cell death. The pores are formed by transmembrane beta-strands and are approximately 3 nm in diameter. This Aeromonas sobria protein is Aerolysin (asa1).